The following is a 181-amino-acid chain: uncharacterized protein (181 aa).

This sequence belongs to the M.jannaschii MJ0150/MJ0739/MJ0745/MJ1460/MJ1642 family.

This is an uncharacterized protein from Methanocaldococcus jannaschii (strain ATCC 43067 / DSM 2661 / JAL-1 / JCM 10045 / NBRC 100440) (Methanococcus jannaschii).